The sequence spans 190 residues: UPF0301 protein PSPTO_5037 (190 aa).

Belongs to the UPF0301 (AlgH) family.

This chain is UPF0301 protein PSPTO_5037, found in Pseudomonas syringae pv. tomato (strain ATCC BAA-871 / DC3000).